A 496-amino-acid polypeptide reads, in one-letter code: MGVKLLADGCAGASSSPALSRVATSAAHGEGSPYFAGWKAYDEDPYDAAANPDGVIQMGLAENQVSIDLLEGYLREHPEAAAWGVAGDGGGDSFRDNALFQDYHGLANFRKAMARFMEKIMGGKATFDPDRIVLTAGATAANELLTFILADPRDALLIPTPYYPGFDRDLRWRTGVNVVPVHCDSANGFQVTAAALQAAHDEAAAAGMRVRGVLITNPSNPLGTTARREALEGILGFVARNDIHLVSDEIYSGSVFAAPDLVSVAELVESSSSRARHRGEDDDGDVGVADRVHVVYSLSKDLGLPGFRVGVVYSRNDAVVAAARRMSSFTLVSSQTQRTLAAVLSDEAFVDAYVAANRARLRERHDHVVAGLARAGVPCLRGNAGLFVWMDMRRLLLGDGGDAATFAGELRLWDRLLREVKLNVSPGSSCHCSEPGWFRVCFANMSLATLDVALERISRFMDAWCKATIGKFNHLQPNRCEVNYFALERYQGHVQQ.

N6-(pyridoxal phosphate)lysine is present on Lys-300.

The protein belongs to the class-I pyridoxal-phosphate-dependent aminotransferase family. The cofactor is pyridoxal 5'-phosphate. As to expression, expressed in leaves. Expressed in shoots and leaf blades. Expressed at low levels in leaf sheaths.

The enzyme catalyses S-adenosyl-L-methionine = 1-aminocyclopropane-1-carboxylate + S-methyl-5'-thioadenosine + H(+). The protein operates within alkene biosynthesis; ethylene biosynthesis via S-adenosyl-L-methionine; ethylene from S-adenosyl-L-methionine: step 1/2. In terms of biological role, catalyzes the formation of 1-aminocyclopropane-1-carboxylate, a direct precursor of ethylene in higher plants. The polypeptide is 1-aminocyclopropane-1-carboxylate synthase 4 (Oryza sativa subsp. japonica (Rice)).